The primary structure comprises 141 residues: Large ribosomal subunit protein uL11 (141 aa).

It belongs to the universal ribosomal protein uL11 family. As to quaternary structure, part of the ribosomal stalk of the 50S ribosomal subunit. Interacts with L10 and the large rRNA to form the base of the stalk. L10 forms an elongated spine to which L12 dimers bind in a sequential fashion forming a multimeric L10(L12)X complex. In terms of processing, one or more lysine residues are methylated.

Forms part of the ribosomal stalk which helps the ribosome interact with GTP-bound translation factors. The protein is Large ribosomal subunit protein uL11 of Pelodictyon phaeoclathratiforme (strain DSM 5477 / BU-1).